Consider the following 73-residue polypeptide: Small ribosomal subunit protein eS27 (73 aa).

Zn(2+) contacts are provided by C28, C31, C47, and C50. The segment at 28 to 50 (CPKCGNRQVVFSHSTFRARCLNC) adopts a C4-type zinc-finger fold.

The protein belongs to the eukaryotic ribosomal protein eS27 family. Part of the 30S ribosomal subunit. It depends on Zn(2+) as a cofactor.

This is Small ribosomal subunit protein eS27 from Aeropyrum pernix (strain ATCC 700893 / DSM 11879 / JCM 9820 / NBRC 100138 / K1).